The primary structure comprises 375 residues: Lipid-A-disaccharide synthase (375 aa).

It belongs to the LpxB family.

It carries out the reaction a lipid X + a UDP-2-N,3-O-bis[(3R)-3-hydroxyacyl]-alpha-D-glucosamine = a lipid A disaccharide + UDP + H(+). Its pathway is bacterial outer membrane biogenesis; LPS lipid A biosynthesis. In terms of biological role, condensation of UDP-2,3-diacylglucosamine and 2,3-diacylglucosamine-1-phosphate to form lipid A disaccharide, a precursor of lipid A, a phosphorylated glycolipid that anchors the lipopolysaccharide to the outer membrane of the cell. In Pseudomonas putida (strain GB-1), this protein is Lipid-A-disaccharide synthase.